The chain runs to 488 residues: Malonate-semialdehyde dehydrogenase (488 aa).

Residues Ala-150, Phe-152, Lys-176, Glu-179, Arg-180, Ser-229, and Thr-251 each coordinate NAD(+). The active-site Nucleophile is Cys-284. Residue Glu-382 participates in NAD(+) binding.

Belongs to the aldehyde dehydrogenase family. IolA subfamily. As to quaternary structure, homotetramer.

It carries out the reaction 3-oxopropanoate + NAD(+) + CoA + H2O = hydrogencarbonate + acetyl-CoA + NADH + H(+). The enzyme catalyses 2-methyl-3-oxopropanoate + NAD(+) + CoA + H2O = propanoyl-CoA + hydrogencarbonate + NADH + H(+). It participates in polyol metabolism; myo-inositol degradation into acetyl-CoA; acetyl-CoA from myo-inositol: step 7/7. In terms of biological role, catalyzes the oxidation of malonate semialdehyde (MSA) and methylmalonate semialdehyde (MMSA) into acetyl-CoA and propanoyl-CoA, respectively. Is involved in a myo-inositol catabolic pathway. Bicarbonate, and not CO2, is the end-product of the enzymatic reaction. This Listeria monocytogenes serotype 4a (strain HCC23) protein is Malonate-semialdehyde dehydrogenase.